The primary structure comprises 167 residues: Large ribosomal subunit protein uL10 (167 aa).

The protein belongs to the universal ribosomal protein uL10 family. In terms of assembly, part of the ribosomal stalk of the 50S ribosomal subunit. The N-terminus interacts with L11 and the large rRNA to form the base of the stalk. The C-terminus forms an elongated spine to which L12 dimers bind in a sequential fashion forming a multimeric L10(L12)X complex.

Forms part of the ribosomal stalk, playing a central role in the interaction of the ribosome with GTP-bound translation factors. This is Large ribosomal subunit protein uL10 from Streptococcus thermophilus (strain CNRZ 1066).